A 311-amino-acid polypeptide reads, in one-letter code: Protoheme IX farnesyltransferase (311 aa).

Helical transmembrane passes span 32–52 (VMSL…VVVD), 53–73 (PLYG…AGAL), 98–118 (ISRG…VFLM), 120–140 (VLIN…YIVI), 153–173 (IVIG…AATG), 180–200 (FLLF…LCLF), 226–246 (ILVY…TGYA), 248–268 (IIYG…AYRL), and 285–305 (FFFS…EFLI).

Belongs to the UbiA prenyltransferase family. Protoheme IX farnesyltransferase subfamily.

The protein resides in the cell inner membrane. The catalysed reaction is heme b + (2E,6E)-farnesyl diphosphate + H2O = Fe(II)-heme o + diphosphate. The protein operates within porphyrin-containing compound metabolism; heme O biosynthesis; heme O from protoheme: step 1/1. Functionally, converts heme B (protoheme IX) to heme O by substitution of the vinyl group on carbon 2 of heme B porphyrin ring with a hydroxyethyl farnesyl side group. This is Protoheme IX farnesyltransferase from Bartonella bacilliformis (strain ATCC 35685 / KC583 / Herrer 020/F12,63).